The chain runs to 352 residues: Quinolinate synthase (352 aa).

The iminosuccinate site is built by His48 and Ser69. Position 114 (Cys114) interacts with [4Fe-4S] cluster. Iminosuccinate-binding positions include 140-142 (YAN) and Ser157. Cys201 is a [4Fe-4S] cluster binding site. Iminosuccinate-binding positions include 227 to 229 (HPE) and Thr244. Cys298 contributes to the [4Fe-4S] cluster binding site.

This sequence belongs to the quinolinate synthase family. Type 1 subfamily. The cofactor is [4Fe-4S] cluster.

It localises to the cytoplasm. It carries out the reaction iminosuccinate + dihydroxyacetone phosphate = quinolinate + phosphate + 2 H2O + H(+). Its pathway is cofactor biosynthesis; NAD(+) biosynthesis; quinolinate from iminoaspartate: step 1/1. Its function is as follows. Catalyzes the condensation of iminoaspartate with dihydroxyacetone phosphate to form quinolinate. This is Quinolinate synthase from Ectopseudomonas mendocina (strain ymp) (Pseudomonas mendocina).